Here is a 214-residue protein sequence, read N- to C-terminus: Adenylate kinase (214 aa).

An ATP-binding site is contributed by 10-15 (GAGKGT). Positions 30–59 (STGDMFRAAVKNETPLGLEAKSYMDKGHLV) are NMP. Residues T31, R36, 57-59 (HLV), 85-88 (GFPR), and Q92 contribute to the AMP site. Residues 126–163 (GRWICPVCGASYHTMFNPPKEAGVCDKDGGKLYQREDD) are LID. ATP is bound at residue R127. Zn(2+) is bound by residues C130 and C133. An ATP-binding site is contributed by 136-137 (SY). Zn(2+) is bound by residues C150 and D153. Positions 160 and 171 each coordinate AMP. ATP is bound at residue Q199.

The protein belongs to the adenylate kinase family. As to quaternary structure, monomer.

The protein resides in the cytoplasm. The enzyme catalyses AMP + ATP = 2 ADP. Its pathway is purine metabolism; AMP biosynthesis via salvage pathway; AMP from ADP: step 1/1. Functionally, catalyzes the reversible transfer of the terminal phosphate group between ATP and AMP. Plays an important role in cellular energy homeostasis and in adenine nucleotide metabolism. This Brevibacillus brevis (strain 47 / JCM 6285 / NBRC 100599) protein is Adenylate kinase.